An 834-amino-acid polypeptide reads, in one-letter code: Probable phosphoenolpyruvate synthase (834 aa).

Residue histidine 447 is the Tele-phosphohistidine intermediate of the active site. Positions 550, 598, 699, 720, 721, 722, and 723 each coordinate substrate. Glutamate 699 contacts Mg(2+). Aspartate 723 contacts Mg(2+). The active-site Proton donor is cysteine 772.

The protein belongs to the PEP-utilizing enzyme family. As to quaternary structure, homooligomer. Forms a large complex of about 2000 kDa. Requires Mg(2+) as cofactor. In terms of processing, the N-terminus is blocked.

The catalysed reaction is pyruvate + ATP + H2O = phosphoenolpyruvate + AMP + phosphate + 2 H(+). It functions in the pathway carbohydrate biosynthesis; gluconeogenesis. Catalyzes the phosphorylation of pyruvate to phosphoenolpyruvate. The chain is Probable phosphoenolpyruvate synthase (ppsA) from Staphylothermus marinus (strain ATCC 43588 / DSM 3639 / JCM 9404 / F1).